Consider the following 639-residue polypeptide: Bone morphogenetic protein 1 homolog (639 aa).

A signal peptide spans 1-23 (MDLLYYMTVSLLGFILSLTTFIG). Positions 24–109 (ETTRALSDDV…RAVTARPERR (86 aa)) are excised as a propeptide. A Peptidase M12A domain is found at 100–305 (RAVTARPERR…IQANLLYKCP (206 aa)). Asn-122 and Asn-140 each carry an N-linked (GlcNAc...) asparagine glycan. 6 disulfides stabilise this stretch: Cys-143/Cys-304, Cys-167/Cys-189, Cys-169/Cys-170, Cys-307/Cys-333, Cys-360/Cys-382, and Cys-420/Cys-446. His-197 provides a ligand contact to Zn(2+). Glu-198 is an active-site residue. Positions 201 and 207 each coordinate Zn(2+). 2 consecutive CUB domains span residues 307–419 (CGRT…YEAI) and 420–531 (CGGH…DFFK). A glycan (N-linked (GlcNAc...) asparagine) is linked at Asn-317. Residue Asn-455 is glycosylated (N-linked (GlcNAc...) asparagine). 4 disulfides stabilise this stretch: Cys-473–Cys-495, Cys-536–Cys-548, Cys-544–Cys-557, and Cys-559–Cys-572. Residues 532–573 (EKDECAQPDQGGCMDVCVNTIGSYRCDCRPGYELSSDGRRCE) form the EGF-like; calcium-binding domain.

Zn(2+) serves as cofactor. In terms of tissue distribution, ectodermal and primary mesenchyme cells in hatched blastula.

This is Bone morphogenetic protein 1 homolog from Strongylocentrotus purpuratus (Purple sea urchin).